Consider the following 492-residue polypeptide: Putative sucrose transport protein SUC6 (492 aa).

The tract at residues 1–26 is disordered; sequence MSDLQANKDAAAVNRQSSSSSADLNG. Residues 1-33 lie on the Cytoplasmic side of the membrane; sequence MSDLQANKDAAAVNRQSSSSSADLNGPSPMRKM. Residues 14 to 23 show a composition bias toward polar residues; that stretch reads NRQSSSSSAD. Residue Ser-17 is modified to Phosphoserine. A helical transmembrane segment spans residues 34 to 54; it reads ISVASIAAGIQFGWALQLSLL. Residues 55 to 68 lie on the Extracellular side of the membrane; that stretch reads TPYVQLLGVPHKWS. The helical transmembrane segment at 69 to 89 threads the bilayer; it reads SFIWLCGPVSGLLVQPSVGYF. The Cytoplasmic portion of the chain corresponds to 90 to 101; the sequence is SDRCKSRFGRRR. A helical membrane pass occupies residues 102–122; the sequence is PFIAMGALLVAVAVVLIGYAA. At 123–139 the chain is on the extracellular side; sequence DFGHSMGDKVDEPVKMR. The helical transmembrane segment at 140-160 threads the bilayer; sequence AVVIFALGFWILDVANNTLQG. Residues 161–181 lie on the Cytoplasmic side of the membrane; sequence PCRAFLGDLAAGDAKKTRTAN. Residues 182-202 form a helical membrane-spanning segment; the sequence is AFFSFFMAVGNVLGYAAGSYT. Topologically, residues 203–224 are extracellular; that stretch reads NLYKIFPFTMTKACDIYCANLK. The chain crosses the membrane as a helical span at residues 225 to 245; that stretch reads SCFFLSITLLLVVTIIALWYV. Residues 246-277 lie on the Cytoplasmic side of the membrane; sequence EDKQWSPKADSDNEKTPFFGEIFGAFKVMKRP. Residues 278 to 298 traverse the membrane as a helical segment; sequence MWMLLIVTALNWIAWFPFLLY. Over 299-324 the chain is Extracellular; it reads DTDWMGREVYGGDSKGDDKMKKLYNQ. A helical membrane pass occupies residues 325–345; that stretch reads GIHVGGLGLMLNSIVLGFMSL. Over 346–359 the chain is Cytoplasmic; it reads GIEGISRKMGGAKR. A helical membrane pass occupies residues 360–380; sequence LWGAVNIILAVCLAMTVLVTK. Residues 381-403 are Extracellular-facing; it reads KAEEHRRIAGPMALPTDGIRAGA. Residues 404–424 traverse the membrane as a helical segment; the sequence is LTLFALLGIPLAITFSIPFAL. Topologically, residues 425-446 are cytoplasmic; it reads ASIISSSSGAGQGLSLGVLNMT. The chain crosses the membrane as a helical span at residues 447-467; that stretch reads IVIPQMVVSFGVGPIDALFGG. Residues 468 to 469 are Extracellular-facing; that stretch reads GN. The helical transmembrane segment at 470 to 490 threads the bilayer; it reads LPGFVVGAIAAAISSVVAFSV. The Cytoplasmic portion of the chain corresponds to 491 to 492; the sequence is LP.

It belongs to the glycoside-pentoside-hexuronide (GPH) cation symporter transporter (TC 2.A.2.4) family.

The protein resides in the cell membrane. It functions in the pathway glycan biosynthesis; sucrose metabolism. Its function is as follows. May be responsible for the transport of glucosides into the cell, with the concomitant uptake of protons (symport system). Does not seem to transport sucrose. The protein is Putative sucrose transport protein SUC6 of Arabidopsis thaliana (Mouse-ear cress).